The primary structure comprises 312 residues: Serine/threonine-protein phosphatase PP1 isozyme 5 (312 aa).

A2 is modified (N-acetylalanine). The Mn(2+) site is built by D70, H72, D98, and N130. H131 serves as the catalytic Proton donor. 2 residues coordinate Mn(2+): H179 and H254.

The protein belongs to the PPP phosphatase family. PP-1 subfamily. Requires Mn(2+) as cofactor.

Its subcellular location is the nucleus. It is found in the cytoplasm. It carries out the reaction O-phospho-L-seryl-[protein] + H2O = L-seryl-[protein] + phosphate. It catalyses the reaction O-phospho-L-threonyl-[protein] + H2O = L-threonyl-[protein] + phosphate. Phosphatase activity is strongly reduced by the protein phosphatase inhibitor 2 (I-2). Functionally, serine/threonine-protein phosphatase that possesses phosphatase activity toward para-nitrophenyl phosphate (pNPP) in vitro. This is Serine/threonine-protein phosphatase PP1 isozyme 5 from Arabidopsis thaliana (Mouse-ear cress).